Consider the following 270-residue polypeptide: Interleukin-1 beta (270 aa).

Positions 1–118 (MATVPEPTSE…VYDDDAFVCD (118 aa)) are excised as a propeptide.

It belongs to the IL-1 family. In terms of assembly, monomer. In its precursor form, weakly interacts with full-length MEFV; the mature cytokine does not interact at all. Interacts with integrins ITGAV:ITGBV and ITGA5:ITGB1; integrin-binding is required for IL1B signaling. Interacts with cargo receptor TMED10; the interaction is direct and is required for the secretion of IL1B mature form. Interacts with HSP90AB1; the interaction facilitates cargo translocation into the ERGIC. Interacts with HSP90B1; the interaction facilitates cargo translocation into the ERGIC.

It localises to the cytoplasm. The protein localises to the cytosol. Its subcellular location is the secreted. It is found in the lysosome. The protein resides in the extracellular exosome. In terms of biological role, potent pro-inflammatory cytokine. Initially discovered as the major endogenous pyrogen, induces prostaglandin synthesis, neutrophil influx and activation, T-cell activation and cytokine production, B-cell activation and antibody production, and fibroblast proliferation and collagen production. Promotes Th17 differentiation of T-cells. Synergizes with IL12/interleukin-12 to induce IFNG synthesis from T-helper 1 (Th1) cells. Plays a role in angiogenesis by inducing VEGF production synergistically with TNF and IL6. Involved in transduction of inflammation downstream of pyroptosis: its mature form is specifically released in the extracellular milieu by passing through the gasdermin-D (GSDMD) pore. In Eumetopias jubatus (Steller sea lion), this protein is Interleukin-1 beta (IL1B).